A 60-amino-acid chain; its full sequence is Large ribosomal subunit protein bL32 (60 aa).

The interval 1–21 is disordered; the sequence is MAVPARHTSKAKKNKRRTHYK. A compositionally biased stretch (basic residues) spans 7-20; that stretch reads HTSKAKKNKRRTHY.

Belongs to the bacterial ribosomal protein bL32 family.

The polypeptide is Large ribosomal subunit protein bL32 (Streptococcus thermophilus (strain ATCC BAA-250 / LMG 18311)).